The following is a 186-amino-acid chain: Calcium load-activated calcium channel homolog (186 aa).

The Cytoplasmic segment spans residues 1–6 (MLGDCL). Residues 7 to 27 (LIIAIAFGTALAGEGITWLLV) form a helical membrane-spanning segment. Topologically, residues 28–87 (YRSDHYKRLKADMDKKTKKLEKKKQEVGDTNDKNIKRKLEREEERLKATNRDMSMFKMKS) are lumenal. Residues 30–86 (SDHYKRLKADMDKKTKKLEKKKQEVGDTNDKNIKRKLEREEERLKATNRDMSMFKMK) are a coiled coil. The chain crosses the membrane as a helical span at residues 88–108 (MFAIGLAFTALLSTFNSIFEG). The Cytoplasmic segment spans residues 109-134 (RVVAKLPFYPIGFIQGLSHRNLIGED). Positions 135–151 (MTDCSFIFLYILCTMTV) form an intramembrane region, pore-forming. The Cytoplasmic segment spans residues 152–186 (RQNLQKILGFAPSRAMARQQSSPWAPPNSQMNYLR).

Belongs to the TMCO1 family. In terms of assembly, homodimer and homotetramer.

Its subcellular location is the endoplasmic reticulum membrane. Functionally, calcium-selective channel required to prevent calcium stores from overfilling. The protein is Calcium load-activated calcium channel homolog of Caenorhabditis elegans.